A 470-amino-acid chain; its full sequence is Neuraminidase (470 aa).

Residues 1–6 (MNPNQK) lie on the Intravirion side of the membrane. A helical membrane pass occupies residues 7–27 (IITIGSICMAIGIISLILQIG). Residues 11 to 33 (GSICMAIGIISLILQIGNIISIW) form an involved in apical transport and lipid raft association region. Residues 28-470 (NIISIWVSHS…GAELPFTIDK (443 aa)) lie on the Virion surface side of the membrane. Positions 36–90 (HSIQTGSQNHTGICNQRIITYENSTWVNQTYVNISNTNVVAGKDTTSMTLAGNSS) are hypervariable stalk region. 5 N-linked (GlcNAc...) asparagine; by host glycosylation sites follow: asparagine 44, asparagine 58, asparagine 63, asparagine 68, and asparagine 88. The head of neuraminidase stretch occupies residues 91-470 (LCPIRGWAIY…GAELPFTIDK (380 aa)). Cystine bridges form between cysteine 92–cysteine 417, cysteine 124–cysteine 129, cysteine 184–cysteine 231, cysteine 233–cysteine 238, cysteine 279–cysteine 292, cysteine 281–cysteine 290, cysteine 318–cysteine 335, and cysteine 421–cysteine 447. Arginine 118 contributes to the substrate binding site. N-linked (GlcNAc...) asparagine; by host glycosylation is present at asparagine 146. The active-site Proton donor/acceptor is the aspartate 151. Arginine 152 provides a ligand contact to substrate. N-linked (GlcNAc...) asparagine; by host glycosylation is present at asparagine 235. Residue 277-278 (EE) participates in substrate binding. Arginine 293 lines the substrate pocket. 3 residues coordinate Ca(2+): aspartate 294, glycine 298, and aspartate 324. The N-linked (GlcNAc...) asparagine; by host glycan is linked to asparagine 365. Arginine 368 is a binding site for substrate. Tyrosine 402 acts as the Nucleophile in catalysis. Asparagine 455 carries N-linked (GlcNAc...) asparagine; by host glycosylation.

This sequence belongs to the glycosyl hydrolase 34 family. As to quaternary structure, homotetramer. Requires Ca(2+) as cofactor. N-glycosylated.

It is found in the virion membrane. The protein localises to the host apical cell membrane. The catalysed reaction is Hydrolysis of alpha-(2-&gt;3)-, alpha-(2-&gt;6)-, alpha-(2-&gt;8)- glycosidic linkages of terminal sialic acid residues in oligosaccharides, glycoproteins, glycolipids, colominic acid and synthetic substrates.. With respect to regulation, inhibited by the neuraminidase inhibitors zanamivir (Relenza) and oseltamivir (Tamiflu). These drugs interfere with the release of progeny virus from infected cells and are effective against all influenza strains. Resistance to neuraminidase inhibitors is quite rare. In terms of biological role, catalyzes the removal of terminal sialic acid residues from viral and cellular glycoconjugates. Cleaves off the terminal sialic acids on the glycosylated HA during virus budding to facilitate virus release. Additionally helps virus spread through the circulation by further removing sialic acids from the cell surface. These cleavages prevent self-aggregation and ensure the efficient spread of the progeny virus from cell to cell. Otherwise, infection would be limited to one round of replication. Described as a receptor-destroying enzyme because it cleaves a terminal sialic acid from the cellular receptors. May facilitate viral invasion of the upper airways by cleaving the sialic acid moieties on the mucin of the airway epithelial cells. Likely to plays a role in the budding process through its association with lipid rafts during intracellular transport. May additionally display a raft-association independent effect on budding. Plays a role in the determination of host range restriction on replication and virulence. Sialidase activity in late endosome/lysosome traffic seems to enhance virus replication. In Aves (Human), this protein is Neuraminidase.